The following is a 149-amino-acid chain: Endoribonuclease YbeY (149 aa).

The Zn(2+) site is built by His116, His120, and His126.

This sequence belongs to the endoribonuclease YbeY family. It depends on Zn(2+) as a cofactor.

It localises to the cytoplasm. Single strand-specific metallo-endoribonuclease involved in late-stage 70S ribosome quality control and in maturation of the 3' terminus of the 16S rRNA. This chain is Endoribonuclease YbeY, found in Nocardioides sp. (strain ATCC BAA-499 / JS614).